We begin with the raw amino-acid sequence, 217 residues long: ITG-like peptide (217 aa).

A signal peptide spans 1 to 21; that stretch reads MHRTMAVTAVLVLSAAGAAHA. The propeptide occupies 22–208; the sequence is WGGLFNRFSS…REFVQHTAGE (187 aa).

ITG-like peptide: Expressed in corpora cardiaca (CC), corpora allata (CA), antennal lobe (AL) and gnathal ganglion (GNG) (at protein level). Expression in AL detected in all animals, expression in GNG detected in most animals and in CA and CC detected in few animals (at protein level).

The protein resides in the secreted. The sequence is that of ITG-like peptide from Agrotis ipsilon (Black cutworm moth).